The following is a 327-amino-acid chain: Thiamine-monophosphate kinase (327 aa).

4 residues coordinate Mg(2+): aspartate 30, serine 45, serine 46, and aspartate 47. Histidine 54 contacts substrate. Aspartate 76 provides a ligand contact to Mg(2+). ATP-binding positions include tyrosine 106, glycine 123–aspartate 124, and arginine 149. Residue aspartate 124 participates in Mg(2+) binding. Aspartate 221 is a Mg(2+) binding site. Serine 223 provides a ligand contact to ATP. Residue aspartate 224 participates in Mg(2+) binding. The substrate site is built by glutamate 268 and phenylalanine 321.

Belongs to the thiamine-monophosphate kinase family.

The catalysed reaction is thiamine phosphate + ATP = thiamine diphosphate + ADP. The protein operates within cofactor biosynthesis; thiamine diphosphate biosynthesis; thiamine diphosphate from thiamine phosphate: step 1/1. In terms of biological role, catalyzes the ATP-dependent phosphorylation of thiamine-monophosphate (TMP) to form thiamine-pyrophosphate (TPP), the active form of vitamin B1. This Synechococcus elongatus (strain ATCC 33912 / PCC 7942 / FACHB-805) (Anacystis nidulans R2) protein is Thiamine-monophosphate kinase.